The following is a 159-amino-acid chain: MSYTIATPSQFVFLSSAWADPIELINLCTNSLGNQFQTQQARTTVQRQFSEVWKPVPQVTVRFPDSGFKVYRYNAVLDPLVTALLGAFDTRNRIIEVENQANPTTAETLDATRRVDDATVAIRSAINNLVVELVKGTGLYNQSTFESASGLQWSSAPAS.

Ser-2 carries the N-acetylserine; by host modification.

It belongs to the virgaviridae capsid protein family.

The protein resides in the virion. In terms of biological role, capsid protein self-assembles to form rod-shaped virions about 18 nm in diameter with a central canal enclosing the viral genomic RNA. In Tomato brown rugose fruit virus (isolate TOBRFV/Tomato/Jordan/Tom1-Jo/2015) (ToBRFV), this protein is Capsid protein (CP).